A 335-amino-acid polypeptide reads, in one-letter code: MNLAKRILQGEQLTKETVLKIYEDTNIDTLDLLNEAYILRKHYFGKKVKLNMILNAKSGICPENCGYCGQSRDIKQKQRYALIPEEQIIDGAKVAHDNHIGTYCIVMSGRGPSDKEVDHISNTVRTIKSQHPQLKICACLGLTNDEQAKKLKSAGVDRYNHNINTSENYHDNVVTTHSYKDRTDTIELMKANNISPCSGVICGMGESNQDIVDMAFALKEMDADSIPINFLHPIKGTKFGSMDDLTPMKCLRIVALFRLINPTKEIRIAGGREVNLRSLQPLALKAANSIFVGDYLITGGQPNQLDYDMINDLGFEIDYDTCENKENKNDVSRAN.

A Radical SAM core domain is found at 43–269; sequence YFGKKVKLNM…INPTKEIRIA (227 aa). [4Fe-4S] cluster contacts are provided by C61, C65, and C68. [2Fe-2S] cluster-binding residues include C104, C137, C197, and R267.

The protein belongs to the radical SAM superfamily. Biotin synthase family. In terms of assembly, homodimer. The cofactor is [4Fe-4S] cluster. [2Fe-2S] cluster is required as a cofactor.

It catalyses the reaction (4R,5S)-dethiobiotin + (sulfur carrier)-SH + 2 reduced [2Fe-2S]-[ferredoxin] + 2 S-adenosyl-L-methionine = (sulfur carrier)-H + biotin + 2 5'-deoxyadenosine + 2 L-methionine + 2 oxidized [2Fe-2S]-[ferredoxin]. It functions in the pathway cofactor biosynthesis; biotin biosynthesis; biotin from 7,8-diaminononanoate: step 2/2. Functionally, catalyzes the conversion of dethiobiotin (DTB) to biotin by the insertion of a sulfur atom into dethiobiotin via a radical-based mechanism. This Staphylococcus aureus (strain MSSA476) protein is Biotin synthase.